Consider the following 276-residue polypeptide: Putative pyruvate, phosphate dikinase regulatory protein (276 aa).

151–158 (GISRTSKT) contacts ADP.

This sequence belongs to the pyruvate, phosphate/water dikinase regulatory protein family. PDRP subfamily.

It catalyses the reaction N(tele)-phospho-L-histidyl/L-threonyl-[pyruvate, phosphate dikinase] + ADP = N(tele)-phospho-L-histidyl/O-phospho-L-threonyl-[pyruvate, phosphate dikinase] + AMP + H(+). The catalysed reaction is N(tele)-phospho-L-histidyl/O-phospho-L-threonyl-[pyruvate, phosphate dikinase] + phosphate + H(+) = N(tele)-phospho-L-histidyl/L-threonyl-[pyruvate, phosphate dikinase] + diphosphate. In terms of biological role, bifunctional serine/threonine kinase and phosphorylase involved in the regulation of the pyruvate, phosphate dikinase (PPDK) by catalyzing its phosphorylation/dephosphorylation. In Streptococcus agalactiae serotype Ia (strain ATCC 27591 / A909 / CDC SS700), this protein is Putative pyruvate, phosphate dikinase regulatory protein.